Reading from the N-terminus, the 553-residue chain is Coiled-coil domain-containing protein 85A (553 aa).

Low complexity predominate over residues 1–28; the sequence is MSKAAGGAAAAAAAAESCSPAPAGSSAA. The disordered stretch occupies residues 1-37; that stretch reads MSKAAGGAAAAAAAAESCSPAPAGSSAAPPAPVEDLS. Coiled coils occupy residues 43–109 and 137–169; these read ELLQ…RDLC and MHKEVALYLQKLKDLEVKQEEVVKENMELKELC. 3 disordered regions span residues 203-414, 433-461, and 491-518; these read YVRD…GMNE, ENRMLPQASQNRRQPPTRNSSNMEKGWGS, and SGADGSNSSPNSAASFSGHATPSQQPEP. Low complexity predominate over residues 209 to 220; sequence DGSSTSSTGSTD. Positions 236 to 260 are enriched in basic and acidic residues; the sequence is HLQKPRSEGSPEHSKHRSASPEHPQ. Gly residues predominate over residues 376-389; it reads GGSGGSGGSGGGSR. The segment covering 391–403 has biased composition (basic and acidic residues); the sequence is GTLRRQAQEDGSP. Positions 412 to 443 form a coiled coil; that stretch reads MNESTLSYVRQLEARVRQLEEENRMLPQASQN. Over residues 439 to 455 the composition is skewed to polar residues; it reads QASQNRRQPPTRNSSNM. Low complexity predominate over residues 491 to 508; the sequence is SGADGSNSSPNSAASFSG. Asymmetric dimethylarginine is present on arginine 541.

It belongs to the CCDC85 family. As to quaternary structure, may interact with ARVCF; CTNND1; CTNND2 and PKP4.

The protein resides in the cell junction. The protein localises to the adherens junction. In terms of biological role, may play a role in cell-cell adhesion and epithelium development through its interaction with proteins of the beta-catenin family. The polypeptide is Coiled-coil domain-containing protein 85A (CCDC85A) (Homo sapiens (Human)).